Consider the following 596-residue polypeptide: NADH-quinone oxidoreductase subunit C/D (596 aa).

The segment at 1–186 (MVDIMCNDST…NPFILTKQKE (186 aa)) is NADH dehydrogenase I subunit C. Residues 210–596 (NFMFLNLGPN…IDFVMSDVDR (387 aa)) are NADH dehydrogenase I subunit D.

It in the N-terminal section; belongs to the complex I 30 kDa subunit family. The protein in the C-terminal section; belongs to the complex I 49 kDa subunit family. NDH-1 is composed of 13 different subunits. Subunits NuoB, CD, E, F, and G constitute the peripheral sector of the complex.

It is found in the cell inner membrane. It carries out the reaction a quinone + NADH + 5 H(+)(in) = a quinol + NAD(+) + 4 H(+)(out). Functionally, NDH-1 shuttles electrons from NADH, via FMN and iron-sulfur (Fe-S) centers, to quinones in the respiratory chain. The immediate electron acceptor for the enzyme in this species is believed to be ubiquinone. Couples the redox reaction to proton translocation (for every two electrons transferred, four hydrogen ions are translocated across the cytoplasmic membrane), and thus conserves the redox energy in a proton gradient. The chain is NADH-quinone oxidoreductase subunit C/D from Blochmanniella pennsylvanica (strain BPEN).